A 144-amino-acid polypeptide reads, in one-letter code: Large ribosomal subunit protein uL15 (144 aa).

Positions 1–10 are enriched in basic and acidic residues; that stretch reads MKLHELKPAE. The segment at 1–52 is disordered; the sequence is MKLHELKPAEGSRQVRNRVGRGTSSGNGKTAGRGQKGQKARGKVRLGFEGGQ. Positions 23–35 are enriched in gly residues; the sequence is TSSGNGKTAGRGQ.

The protein belongs to the universal ribosomal protein uL15 family. In terms of assembly, part of the 50S ribosomal subunit.

In terms of biological role, binds to the 23S rRNA. This is Large ribosomal subunit protein uL15 from Ligilactobacillus salivarius (strain UCC118) (Lactobacillus salivarius).